Here is an 84-residue protein sequence, read N- to C-terminus: MSEPIENLTVDAVLEAVGLFCPEPVMMLHQKVRDLPAGGLLKVIATDPSTRRDIPKFCVFLGHELVAEQAEEGTFLYWIRKKPD.

Cys-21 (cysteine persulfide intermediate) is an active-site residue.

This sequence belongs to the sulfur carrier protein TusA family.

It is found in the cytoplasm. Sulfur carrier protein which probably makes part of a sulfur-relay system. The polypeptide is Sulfur carrier protein TusA (Pseudomonas savastanoi pv. phaseolicola (strain 1448A / Race 6) (Pseudomonas syringae pv. phaseolicola (strain 1448A / Race 6))).